Reading from the N-terminus, the 522-residue chain is Ribonuclease Y (522 aa).

Residues 7 to 23 traverse the membrane as a helical segment; it reads SGSSAAVISGLVGFYIS. A KH domain is found at 212 to 278; sequence LTNLVHLNDD…TKTLELLIQD (67 aa). Positions 338–431 constitute an HD domain; it reads ALSHTLEVAH…VCAADALSAA (94 aa).

This sequence belongs to the RNase Y family.

It localises to the cell membrane. Endoribonuclease that initiates mRNA decay. The sequence is that of Ribonuclease Y from Sulfurimonas denitrificans (strain ATCC 33889 / DSM 1251) (Thiomicrospira denitrificans (strain ATCC 33889 / DSM 1251)).